Consider the following 605-residue polypeptide: Phosphoenolpyruvate carboxykinase [GTP] (605 aa).

Substrate is bound by residues Arg79 and 218-220; that span reads YGG. Mn(2+) contacts are provided by Lys227 and His247. Ser269 serves as a coordination point for substrate. 270–275 provides a ligand contact to GTP; sequence ACGKTN. Cys271 is an active-site residue. Asp294 is a binding site for Mn(2+). Over residues 364-381 the composition is skewed to basic and acidic residues; that stretch reads LTDWKGRDWTPQSDEKAA. The segment at 364-385 is disordered; the sequence is LTDWKGRDWTPQSDEKAAHPNS. Substrate is bound at residue 384–386; sequence NSR. GTP contacts are provided by residues Arg386, Arg417, and 513–516; that span reads FGEN.

The protein belongs to the phosphoenolpyruvate carboxykinase [GTP] family. As to quaternary structure, monomer. Requires Mn(2+) as cofactor.

It is found in the cytoplasm. The enzyme catalyses oxaloacetate + GTP = phosphoenolpyruvate + GDP + CO2. It participates in carbohydrate biosynthesis; gluconeogenesis. Catalyzes the conversion of oxaloacetate (OAA) to phosphoenolpyruvate (PEP), the rate-limiting step in the metabolic pathway that produces glucose from lactate and other precursors derived from the citric acid cycle. This is Phosphoenolpyruvate carboxykinase [GTP] from Saccharopolyspora erythraea (strain ATCC 11635 / DSM 40517 / JCM 4748 / NBRC 13426 / NCIMB 8594 / NRRL 2338).